The following is a 156-amino-acid chain: MNKIESRHRLIRSLIMEKKVHTQQELQELLEANGVIVTQSTLSRDMKALNLVKVTENNISYYVINSIAPSRWEKRLRFYMEDALIMLRPVQNQVVMKTLPGLAQSFGAILDALELPQIVATVCGDDVCLIICEDNPSAIECFDKLKEFAPPFFFSK.

The protein belongs to the ArgR family.

The protein resides in the cytoplasm. It participates in amino-acid degradation; L-arginine degradation via ADI pathway. In the presence of arginine, coactivates the transcription of the arcABDC operon, with other regulatory proteins such as ArcR and CcpA. The protein is Arginine regulator (argR) of Streptococcus gordonii (strain Challis / ATCC 35105 / BCRC 15272 / CH1 / DL1 / V288).